The sequence spans 135 residues: HVA22-like protein d (135 aa).

Helical transmembrane passes span L11 to A31, Q42 to S62, and L63 to L83.

The protein belongs to the DP1 family. In terms of tissue distribution, predominantly expressed in flower buds.

The protein localises to the membrane. This Arabidopsis thaliana (Mouse-ear cress) protein is HVA22-like protein d (HVA22D).